Consider the following 480-residue polypeptide: Protein nucleotidyltransferase YdiU (480 aa).

Glycine 84, glycine 86, arginine 87, lysine 107, aspartate 119, glycine 120, arginine 170, and arginine 177 together coordinate ATP. The Proton acceptor role is filled by aspartate 246. Mg(2+) is bound by residues asparagine 247 and aspartate 256. Aspartate 256 serves as a coordination point for ATP.

The protein belongs to the SELO family. Requires Mg(2+) as cofactor. The cofactor is Mn(2+).

It carries out the reaction L-seryl-[protein] + ATP = 3-O-(5'-adenylyl)-L-seryl-[protein] + diphosphate. The enzyme catalyses L-threonyl-[protein] + ATP = 3-O-(5'-adenylyl)-L-threonyl-[protein] + diphosphate. The catalysed reaction is L-tyrosyl-[protein] + ATP = O-(5'-adenylyl)-L-tyrosyl-[protein] + diphosphate. It catalyses the reaction L-histidyl-[protein] + UTP = N(tele)-(5'-uridylyl)-L-histidyl-[protein] + diphosphate. It carries out the reaction L-seryl-[protein] + UTP = O-(5'-uridylyl)-L-seryl-[protein] + diphosphate. The enzyme catalyses L-tyrosyl-[protein] + UTP = O-(5'-uridylyl)-L-tyrosyl-[protein] + diphosphate. Functionally, nucleotidyltransferase involved in the post-translational modification of proteins. It can catalyze the addition of adenosine monophosphate (AMP) or uridine monophosphate (UMP) to a protein, resulting in modifications known as AMPylation and UMPylation. This is Protein nucleotidyltransferase YdiU from Pseudoalteromonas atlantica (strain T6c / ATCC BAA-1087).